We begin with the raw amino-acid sequence, 460 residues long: Centrosomal protein CEP57L1 (460 aa).

Ser-49 is modified (phosphoserine). 2 coiled-coil regions span residues 51–228 (NSQA…EISK) and 317–384 (ISIC…LKKH). Positions 399–410 (KMSEASGIQQED) are enriched in polar residues. A disordered region spans residues 399-423 (KMSEASGIQQEDSYPKGSKNIKNSP).

It belongs to the translokin family.

It is found in the cytoplasm. The protein resides in the cytoskeleton. It localises to the microtubule organizing center. The protein localises to the centrosome. Functionally, centrosomal protein which may be required for microtubule attachment to centrosomes. The polypeptide is Centrosomal protein CEP57L1 (CEP57L1) (Homo sapiens (Human)).